Reading from the N-terminus, the 494-residue chain is UDP-N-acetylmuramoyl-L-alanyl-D-glutamate--L-lysine ligase (494 aa).

Ser-30 is a UDP-N-acetyl-alpha-D-muramoyl-L-alanyl-D-glutamate binding site. Position 110-116 (110-116) interacts with ATP; sequence GTNGKTS. UDP-N-acetyl-alpha-D-muramoyl-L-alanyl-D-glutamate contacts are provided by residues 152–153, Ser-179, and Arg-187; that span reads TT. Position 219 is an N6-carboxylysine (Lys-219). The L-lysine recognition motif signature appears at 406 to 409; it reads DNPA.

Belongs to the MurCDEF family. MurE subfamily. Carboxylation is probably crucial for Mg(2+) binding and, consequently, for the gamma-phosphate positioning of ATP.

Its subcellular location is the cytoplasm. It carries out the reaction UDP-N-acetyl-alpha-D-muramoyl-L-alanyl-D-glutamate + L-lysine + ATP = UDP-N-acetyl-alpha-D-muramoyl-L-alanyl-gamma-D-glutamyl-L-lysine + ADP + phosphate + H(+). It participates in cell wall biogenesis; peptidoglycan biosynthesis. Catalyzes the addition of L-lysine to the nucleotide precursor UDP-N-acetylmuramoyl-L-alanyl-D-glutamate (UMAG) in the biosynthesis of bacterial cell-wall peptidoglycan. This Staphylococcus epidermidis (strain ATCC 35984 / DSM 28319 / BCRC 17069 / CCUG 31568 / BM 3577 / RP62A) protein is UDP-N-acetylmuramoyl-L-alanyl-D-glutamate--L-lysine ligase.